Consider the following 310-residue polypeptide: MSSVTQPLAVPRPGVASLLRDYSELTKARVTTLIVMTAWTGAFFGAAKSGLPLVSWTLFHALLGIGLVSGGTAAMNEVIERESDARMRRTAIRPLVTGSMSLGHGMVVSLVMMIGGAGYLGLMTNWLTAALALMTSVVYLMAYTPLKKIHPICTTIGAFPGAMPPVLGWTAIRGHLGWEAVALFAILFFWQFPHFHSIAWLYRDDYANAGIRMLPVVERDGRSTAREIVIYAAFLLPITLTPFLLRFAGRIYFLAALVLGSMLFWVSLRMFTMNLAPSSPHSKKYARQLLLASVTYLPLLFAVMMLDRTI.

9 helical membrane-spanning segments follow: residues 30–47 (VTTL…FGAA), 50–70 (GLPL…LVSG), 102–122 (LGHG…YLGL), 126–146 (WLTA…YTPL), 152–172 (ICTT…WTAI), 181–201 (VALF…IAWL), 228–248 (IVIY…LRFA), 251–271 (IYFL…LRMF), and 286–306 (ARQL…VMML).

It belongs to the UbiA prenyltransferase family. Protoheme IX farnesyltransferase subfamily.

The protein resides in the cell inner membrane. The catalysed reaction is heme b + (2E,6E)-farnesyl diphosphate + H2O = Fe(II)-heme o + diphosphate. Its pathway is porphyrin-containing compound metabolism; heme O biosynthesis; heme O from protoheme: step 1/1. In terms of biological role, converts heme B (protoheme IX) to heme O by substitution of the vinyl group on carbon 2 of heme B porphyrin ring with a hydroxyethyl farnesyl side group. The sequence is that of Protoheme IX farnesyltransferase from Koribacter versatilis (strain Ellin345).